The primary structure comprises 37 residues: Cytochrome b6-f complex subunit 5 (37 aa).

Residues 5–25 (LLCGIVLGLIPITLAGLFVAA) form a helical membrane-spanning segment.

The protein belongs to the PetG family. In terms of assembly, the 4 large subunits of the cytochrome b6-f complex are cytochrome b6, subunit IV (17 kDa polypeptide, PetD), cytochrome f and the Rieske protein, while the 4 small subunits are PetG, PetL, PetM and PetN. The complex functions as a dimer.

It localises to the cellular thylakoid membrane. In terms of biological role, component of the cytochrome b6-f complex, which mediates electron transfer between photosystem II (PSII) and photosystem I (PSI), cyclic electron flow around PSI, and state transitions. PetG is required for either the stability or assembly of the cytochrome b6-f complex. This is Cytochrome b6-f complex subunit 5 from Cyanothece sp. (strain PCC 7425 / ATCC 29141).